The following is a 149-amino-acid chain: C-type lectin domain family 2 member B (149 aa).

Residues 1-7 (MMTKHKK) are Cytoplasmic-facing. The chain crosses the membrane as a helical; Signal-anchor for type II membrane protein span at residues 8-25 (CFIIVGVLITTNIITLIV). The Extracellular segment spans residues 26 to 149 (KLTRDSQSLC…RKWICRKRIH (124 aa)). Cysteines 35 and 46 form a disulfide. Positions 42–145 (FQNKCYYFSK…CYTERKWICR (104 aa)) constitute a C-type lectin domain. N-linked (GlcNAc...) asparagine glycosylation is found at N57, N62, and N100. 2 cysteine pairs are disulfide-bonded: C63–C144 and C123–C136.

As to quaternary structure, homodimer. Interacts with NKp80/KLRF1. Post-translationally, (Microbial infection) Ubiquitinated by human herpesvirus 8 protein K5, leading to endolysosomal degradation. In terms of processing, N-linked glycosylated; required to enable surface expression and the extent of surface expression correlates with the number of functional conventional N-glycosylation sites. As to expression, expressed preferentially in lymphoid tissues, and in most hematopoietic cell types.

The protein localises to the cell membrane. It localises to the golgi apparatus membrane. In terms of biological role, membrane-bound protein expressed on myeloid cells which acts as a ligand to stimulate the activating receptor NKp80/KLRF1, expressed on the surface of natural killer (NK) cells. In turn, stimulates NK-cell cytotoxicity and cytokine production leading to the cytolysis of malignant CLEC2B-expressing myeloid cells. The protein is C-type lectin domain family 2 member B (CLEC2B) of Homo sapiens (Human).